A 728-amino-acid chain; its full sequence is Phomopsene synthase (728 aa).

The terpene cyclase stretch occupies residues 1–327 (MEYRYSYVID…PRYHSDQSLD (327 aa)). Mg(2+) contacts are provided by aspartate 94 and aspartate 98. Residues aspartate 94, aspartate 98, 181–184 (RIVD), asparagine 226, 230–234 (SWEKE), and 319–320 (RY) each bind substrate. Positions 94 to 98 (DDLVD) match the DDXXD 1 motif. Residues 226–234 (NDVQSWEKE) carry the NSE/DTE motif. Positions 328–728 (EMMVARMKYG…FRFLLSLLKV (401 aa)) are prenyltransferase. Over residues 352–363 (ENRGTKRTHQDD) the composition is skewed to basic and acidic residues. A disordered region spans residues 352–379 (ENRGTKRTHQDDTEGVQSVKRFNGASTK). A run of 3 repeats spans residues 381 to 386 (GINGTN), 387 to 392 (GINGLN), and 393 to 398 (GINGSN). A 3 X 6 AA approximate tandem repeats region spans residues 381–398 (GINGTNGINGLNGINGSN). The isopentenyl diphosphate site is built by lysine 447, arginine 450, and histidine 479. The Mg(2+) site is built by aspartate 486 and aspartate 490. The short motif at 486 to 490 (DDVQD) is the DDXXD 2 element. A dimethylallyl diphosphate-binding site is contributed by arginine 495. Arginine 496 serves as a coordination point for isopentenyl diphosphate. Dimethylallyl diphosphate-binding residues include lysine 574, threonine 575, glutamine 610, asparagine 617, lysine 627, and lysine 637.

The protein in the N-terminal section; belongs to the terpene synthase family. This sequence in the C-terminal section; belongs to the FPP/GGPP synthase family. As to quaternary structure, hexamer. The cofactor is Mg(2+).

It catalyses the reaction isopentenyl diphosphate + (2E,6E)-farnesyl diphosphate = (2E,6E,10E)-geranylgeranyl diphosphate + diphosphate. It participates in secondary metabolite biosynthesis; terpenoid biosynthesis. Bifunctional terpene synthase; part of the gene cluster that mediates the biosynthesis of the diterpene methyl phomopsenonate. At first, the universal precursor of diterpene, geranylgeranyl diphosphate (GGPP) is provided and is cyclized by the unusual bifunctional terpene synthase PaPS to give phomopsene. The C-terminal prenyltransferase domain of PaPS catalyzes formation of GGPP, whereas the N-terminal terpene cyclase domain catalyzes the cyclization of GGPP to phomopsene. Since the oxidation of a methylgroup to a carboxyl group is frequently catalyzed by a cytochrome P450 monooxygenase, the C-16 methyl group would be oxidized by the cluster-specific cytochrome P450 monooxygenase ORF3. Subsequently, oxidation of the allylic position and methylation of the carboxyl group may give methyl phomopsenonate. Although further study is necessary to identify genes such as a monooxygenase and a methyltransferase, the predicted functions of genes on the cluster are correlated with the structure of methyl phomopsenonate. This chain is Phomopsene synthase, found in Phomopsis amygdali (Fusicoccum amygdali).